A 178-amino-acid polypeptide reads, in one-letter code: MKAYWYDNKPGDQREPHDSGRPVSEDYLASLGVIYRHFPELSDVDALAKERGYKNRDEITVSPATMGEAYEDKVKMFFAEHLHEDEEIRYIRDGEGYFDVRGKEDEWVRIRLVKDDLIILPAGIYHRFTTDNKNYIKAMRLFQEEPKWTPLNRAPELDENQHRKSYLEGLTATSIAAN.

The tract at residues 1-22 (MKAYWYDNKPGDQREPHDSGRP) is disordered. Residues 9–22 (KPGDQREPHDSGRP) show a composition bias toward basic and acidic residues. Residues H81, H83, E87, and H126 each contribute to the Fe(2+) site. Ni(2+) contacts are provided by H81, H83, E87, and H126.

The protein belongs to the acireductone dioxygenase (ARD) family. Fe(2+) is required as a cofactor. Ni(2+) serves as cofactor.

The protein resides in the cytoplasm. The protein localises to the nucleus. The enzyme catalyses 1,2-dihydroxy-5-(methylsulfanyl)pent-1-en-3-one + O2 = 4-methylsulfanyl-2-oxobutanoate + formate + 2 H(+). It catalyses the reaction 1,2-dihydroxy-5-(methylsulfanyl)pent-1-en-3-one + O2 = 3-(methylsulfanyl)propanoate + CO + formate + 2 H(+). Its pathway is amino-acid biosynthesis; L-methionine biosynthesis via salvage pathway; L-methionine from S-methyl-5-thio-alpha-D-ribose 1-phosphate: step 5/6. In terms of biological role, catalyzes 2 different reactions between oxygen and the acireductone 1,2-dihydroxy-3-keto-5-methylthiopentene (DHK-MTPene) depending upon the metal bound in the active site. Fe-containing acireductone dioxygenase (Fe-ARD) produces formate and 2-keto-4-methylthiobutyrate (KMTB), the alpha-ketoacid precursor of methionine in the methionine recycle pathway. Ni-containing acireductone dioxygenase (Ni-ARD) produces methylthiopropionate, carbon monoxide and formate, and does not lie on the methionine recycle pathway. This is Acireductone dioxygenase (adi1) from Emericella nidulans (strain FGSC A4 / ATCC 38163 / CBS 112.46 / NRRL 194 / M139) (Aspergillus nidulans).